The chain runs to 288 residues: F420-non-reducing hydrogenase vhu subunit G (288 aa).

It belongs to the [NiFe]/[NiFeSe] hydrogenase small subunit family. In terms of assembly, the F420-non-reducing hydrogenase vhu is composed of four subunits; VhuA, VhuD, VhuG and VhuU.

This is F420-non-reducing hydrogenase vhu subunit G (vhuG) from Methanocaldococcus jannaschii (strain ATCC 43067 / DSM 2661 / JAL-1 / JCM 10045 / NBRC 100440) (Methanococcus jannaschii).